Reading from the N-terminus, the 141-residue chain is ATP synthase F(0) complex subunit C3, mitochondrial (141 aa).

The transit peptide at 1-66 (MFACAKLART…REFQTSVISR (66 aa)) directs the protein to the mitochondrion. Residues 82 to 102 (VGVAGSGAGIGTVFGSLIIGY) form a helical membrane-spanning segment. K109 carries the post-translational modification N6,N6,N6-trimethyllysine. Residues 117-137 (ILGFALSEAMGLFCLMVAFLI) form a helical membrane-spanning segment.

This sequence belongs to the ATPase C chain family. F-type ATPases have 2 components, CF(1) - the catalytic core - and CF(0) - the membrane proton channel. CF(1) has five subunits: alpha(3), beta(3), gamma(1), delta(1), epsilon(1). CF(0) has three main subunits: a, b and c. Interacts with TMEM70 and TMEM242. Trimethylated by ATPSCKMT at Lys-109. Methylation is required for proper incorporation of the C subunit into the ATP synthase complex and mitochondrial respiration.

The protein resides in the mitochondrion membrane. Functionally, mitochondrial membrane ATP synthase (F(1)F(0) ATP synthase or Complex V) produces ATP from ADP in the presence of a proton gradient across the membrane which is generated by electron transport complexes of the respiratory chain. F-type ATPases consist of two structural domains, F(1) - containing the extramembraneous catalytic core and F(0) - containing the membrane proton channel, linked together by a central stalk and a peripheral stalk. During catalysis, ATP synthesis in the catalytic domain of F(1) is coupled via a rotary mechanism of the central stalk subunits to proton translocation. Part of the complex F(0) domain. A homomeric c-ring of probably 10 subunits is part of the complex rotary element. The chain is ATP synthase F(0) complex subunit C3, mitochondrial from Mus musculus (Mouse).